Consider the following 251-residue polypeptide: Imidazole glycerol phosphate synthase subunit HisF (251 aa).

Catalysis depends on residues D11 and D130.

This sequence belongs to the HisA/HisF family. As to quaternary structure, heterodimer of HisH and HisF.

Its subcellular location is the cytoplasm. It catalyses the reaction 5-[(5-phospho-1-deoxy-D-ribulos-1-ylimino)methylamino]-1-(5-phospho-beta-D-ribosyl)imidazole-4-carboxamide + L-glutamine = D-erythro-1-(imidazol-4-yl)glycerol 3-phosphate + 5-amino-1-(5-phospho-beta-D-ribosyl)imidazole-4-carboxamide + L-glutamate + H(+). The protein operates within amino-acid biosynthesis; L-histidine biosynthesis; L-histidine from 5-phospho-alpha-D-ribose 1-diphosphate: step 5/9. In terms of biological role, IGPS catalyzes the conversion of PRFAR and glutamine to IGP, AICAR and glutamate. The HisF subunit catalyzes the cyclization activity that produces IGP and AICAR from PRFAR using the ammonia provided by the HisH subunit. The polypeptide is Imidazole glycerol phosphate synthase subunit HisF (Chlorobium phaeobacteroides (strain BS1)).